Consider the following 2298-residue polypeptide: Protein Ycf2 (2298 aa).

1652-1659 is a binding site for ATP; sequence GSIGTGRS.

Belongs to the Ycf2 family.

The protein localises to the plastid. The protein resides in the chloroplast stroma. Functionally, probable ATPase of unknown function. Its presence in a non-photosynthetic plant (Epifagus virginiana) and experiments in tobacco indicate that it has an essential function which is probably not related to photosynthesis. The protein is Protein Ycf2 of Aethionema cordifolium (Lebanon stonecress).